The primary structure comprises 402 residues: Multidrug resistance protein MdtH (402 aa).

Topologically, residues 1–12 (MSRVSQARNLGK) are cytoplasmic. A helical membrane pass occupies residues 13-33 (YFLLIDNMLVVLGFFVVFPLI). The Periplasmic segment spans residues 34–98 (SIRFVDQMGW…GFATMGIAHE (65 aa)). A helical transmembrane segment spans residues 99–116 (PWLLWFSCFLSGLGGTLF). Residues 117–138 (DPPRSALVVKLIRPEQRGRFFS) lie on the Cytoplasmic side of the membrane. The helical transmembrane segment at 139 to 159 (LLMMQDSAGAVIGALLGSWLL) threads the bilayer. The Periplasmic portion of the chain corresponds to 160-164 (QYDFR). A helical membrane pass occupies residues 165 to 185 (LVCATGAILFILCALFNAWLL). Residues 186-213 (PAWKLSTVRTPVREGMRRVMSDKRFVTY) are Cytoplasmic-facing. The helical transmembrane segment at 214 to 234 (VLTLAGYYMLAVQVMLMLPIM) threads the bilayer. The Periplasmic segment spans residues 235–243 (VNDIAGSPA). The chain crosses the membrane as a helical span at residues 244–264 (AVKWMYAIEACLSLTLLYPIA). Over 265–276 (RWSEKRFRLEHR) the chain is Cytoplasmic. A helical transmembrane segment spans residues 277–297 (LMAGLLVMSLSMLPIGMVGNL). Residues 298–299 (QQ) are Periplasmic-facing. The chain crosses the membrane as a helical span at residues 300–320 (LFTLICAFYIGSVIAEPARET). Residues 321-339 (LSASLADARARGSYMGFSR) lie on the Cytoplasmic side of the membrane. A helical membrane pass occupies residues 340–360 (LGLAIGGAIGYIGGGWLFDMG). Residues 361 to 367 (KALAQPE) are Periplasmic-facing. A helical membrane pass occupies residues 368-388 (LPWMMLGIIGFITFLALGWQF). Residues 389–402 (SHKRTPRRMLEPGA) lie on the Cytoplasmic side of the membrane.

Belongs to the major facilitator superfamily. DHA1 family. MdtH (TC 2.A.1.2.21) subfamily.

It is found in the cell inner membrane. The chain is Multidrug resistance protein MdtH from Salmonella agona (strain SL483).